A 478-amino-acid polypeptide reads, in one-letter code: Septin-4 (478 aa).

A disordered region spans residues V38–Y115. The segment covering A95–P108 has biased composition (low complexity). 2 positions are modified to phosphoserine: S117 and S118. A Septin-type G domain is found at K141 to S414. The G1 motif stretch occupies residues G151 to S158. Residues G151–S158 and T185 each bind GTP. Positions D208–G211 are G3 motif. The tract at residues A289–D292 is G4 motif. K290–E298 serves as a coordination point for GTP. A Phosphoserine modification is found at S325. GTP is bound by residues G348 and R363. Positions R425–E448 are disordered. S432 carries the phosphoserine modification. T434 is subject to Phosphothreonine. Residues D446–Y478 are a coiled coil.

Belongs to the TRAFAC class TrmE-Era-EngA-EngB-Septin-like GTPase superfamily. Septin GTPase family. In terms of assembly, septins polymerize into heterooligomeric protein complexes that form filaments, and can associate with cellular membranes, actin filaments and microtubules. GTPase activity is required for filament formation. Interacts with SEPTIN8. Component of a septin core octameric complex consisting of SEPTIN12, SEPTIN7, SEPTIN6 and SEPTIN2 or SEPTIN4 in the order 12-7-6-2-2-6-7-12 or 12-7-6-4-4-6-7-12. Interacts with SEPTIN14 (via C-terminus). Interacts with DYRK1A. Interacts with SLC6A3/DAT and SNCA/alpha-synuclein. Interacts with STX1A; in the striatum. Interacts with XIAP (via BIR3 domain) following the induction of apoptosis. Interacts with AREL1 (via HECT domain); in the cytoplasm following induction of apoptosis. Ubiquitinated by AREL1. Post-translationally, phosphorylated by DYRK1A.

The protein resides in the cytoplasm. The protein localises to the cell projection. It is found in the cilium. Its subcellular location is the flagellum. It localises to the cytoplasmic vesicle. The protein resides in the secretory vesicle. The protein localises to the axon. It is found in the dendrite. Its subcellular location is the perikaryon. It localises to the synapse. In terms of biological role, filament-forming cytoskeletal GTPase. Pro-apoptotic protein involved in LGR5-positive intestinal stem cell and Paneth cell expansion in the intestines, via its interaction with XIAP. May also play a role in the regulation of cell fate in the intestine. Positive regulator of apoptosis involved in hematopoietic stem cell homeostasis; via its interaction with XIAP. Negative regulator of repair and hair follicle regeneration in response to injury, due to inhibition of hair follicle stem cell proliferation, potentially via its interaction with XIAP. Plays an important role in male fertility and sperm motility. During spermiogenesis, essential for the establishment of the annulus (a fibrous ring structure connecting the midpiece and the principal piece of the sperm flagellum) which is a requisite for the structural and mechanical integrity of the sperm. Involved in the migration of cortical neurons and the formation of neuron leading processes during embryonic development. Required for dopaminergic metabolism in presynaptic autoreceptors; potentially via activity as a presynaptic scaffold protein. The protein is Septin-4 of Pongo abelii (Sumatran orangutan).